Here is a 567-residue protein sequence, read N- to C-terminus: MNLFRKISEKLKSYEDWVTEANYYLDEGIYDKAVECYLKALEKKNTNPIDWFNLAYALYHLEKYDSALEAINEALKISPSNIYFAYLKGLIHYKRGEIILAYKYLKKASEKIKNEELFEILGDISVKYGRYEEALKYYLKSYKMANSKNLNALFKAGKIYLLFGDIDKAYDAFNEILQQNPSHECKKIVECMENVVNAINSYEDLNNGLTMIKNKDYIGALKIFNKVLQIDENSDISYYYKSVIAEIFEEYKKALEYIDKSISIFNRSLYYAKKGDILYKLGDEEGAIEAYNKAIKLNSQNPYAYFGLAILYYRKGELEKSSNFFDKVLETYLEELSEEDISALNLYSLIGKAETTGIPKYYHEAMKYVDNLINLENSSRWWYVKGYIYYKLGNYKDAYESFMNALRVNPKDISTLKSLAIVLEKSGKIDEAITTYTKILKIVNSLQFTCEIDNILEKLRSRKPTNLEIPSVLFDIPVMYHKPNITCFYASNLWKYMANNNPIGAYIYLSFIESYISLDEISQMVNDIKSKLSLEMYRYCELIDDYKSDESVLMQIKELLQKLGCML.

TPR repeat units lie at residues 14-47, 48-81, 83-115, 116-148, 150-183, 199-234, 236-268, 269-301, 303-335, 344-379, 380-412, 414-446, and 505-538; these read YEDWVTEANYYLDEGIYDKAVECYLKALEKKNTN, PIDWFNLAYALYHLEKYDSALEAINEALKISPSN, YFAYLKGLIHYKRGEIILAYKYLKKASEKIKNE, ELFEILGDISVKYGRYEEALKYYLKSYKMANSK, LNALFKAGKIYLLFGDIDKAYDAFNEILQQNPSH, INSYEDLNNGLTMIKNKDYIGALKIFNKVLQIDENS, ISYYYKSVIAEIFEEYKKALEYIDKSISIFNRS, LYYAKKGDILYKLGDEEGAIEAYNKAIKLNSQN, YAYFGLAILYYRKGELEKSSNFFDKVLETYLEE, LNLYSLIGKAETTGIPKYYHEAMKYVDNLINLENSS, RWWYVKGYIYYKLGNYKDAYESFMNALRVNPKD, STLKSLAIVLEKSGKIDEAITTYTKILKIVNSL, and AYIYLSFIESYISLDEISQMVNDIKSKLSLEMYR.

This chain is TPR repeat-containing protein MJ1428, found in Methanocaldococcus jannaschii (strain ATCC 43067 / DSM 2661 / JAL-1 / JCM 10045 / NBRC 100440) (Methanococcus jannaschii).